Reading from the N-terminus, the 492-residue chain is MLCLRRRTQIANPMINAVGETAEQAVKKLEKVFEVLKDRNERFPLTEISKQIDVIWESVFSVTHATAPQKKYELAEEFLNHPGVVKNLLMVFDGVQVETKRKIRDLLIFIRTWTSNDFLADAEGSLVPNPRQARPSQKFQDVLYECRFIMLHIVHEGYAGSDSIGLYNDIIRIFAEDDACLMFMLKDKGTDSNEVKQKFEGCVWAIFDRLFNTHTYRGFHILAEIFETFEIIFSQNHEASQYFFYNNLSRFSQSFHWLIAANNFFIQTKSLRFVRDIFSNRYMAEVRRQWMADPSLIKYVFLHLQSIHKTVCLEAVGLLNIFVQNPCNAPPIHKLISINRKLLLEYCRQNAPNPKDENQALDELFDETITYLVNWNEEEPAHEPTAQDTLKMRSIKLKMRREHTLELVQNEIPLFPRNNLLPTSPRQSSFVYNRRLPRVSSSRAGIRFGETRNVKGSPRSRSQSPRPPTGPEPSPRTTSYQNVRFPPEDSSR.

The tract at residues 442-492 (SRAGIRFGETRNVKGSPRSRSQSPRPPTGPEPSPRTTSYQNVRFPPEDSSR) is disordered. A compositionally biased stretch (pro residues) spans 465 to 474 (PRPPTGPEPS).

It belongs to the Mo25 family.

The protein is MO25-like protein 3 of Caenorhabditis briggsae.